A 369-amino-acid chain; its full sequence is Putative FAD-dependent oxidoreductase LodB (369 aa).

Residues 10–14 and arginine 103 each bind FAD; that span reads GGGPA.

Requires FAD as cofactor.

It is found in the cytoplasm. Its function is as follows. Is required for lysine-epsilon oxidase (LOD) activity in M.mediterranea. May be involved in the generation of the quinonic cofactor of LodA, leading to the active form of LodA containing a tyrosine-derived quinone cofactor. The chain is Putative FAD-dependent oxidoreductase LodB (lodB) from Marinomonas mediterranea (strain ATCC 700492 / JCM 21426 / NBRC 103028 / MMB-1).